We begin with the raw amino-acid sequence, 115 residues long: Large ribosomal subunit protein bL19 (115 aa).

This sequence belongs to the bacterial ribosomal protein bL19 family.

This protein is located at the 30S-50S ribosomal subunit interface and may play a role in the structure and function of the aminoacyl-tRNA binding site. The sequence is that of Large ribosomal subunit protein bL19 from Desulforapulum autotrophicum (strain ATCC 43914 / DSM 3382 / VKM B-1955 / HRM2) (Desulfobacterium autotrophicum).